Here is a 419-residue protein sequence, read N- to C-terminus: MMLRTCKDVTMRGERVVVRVDFNVPMRDGMVQDDTRVTAAVPTLRYIIEQGPRHVVLISHLGDPTRDADKAEGNAKKDGCPFDRHAFINGKHRLKPVADCLAKKLGVPVHFAPSCVGQREFIEGLPDGSVVLLENVRFHPEETSGDAKVQEQFARELAQYGDIFVNDAFGTAHREHASTVVLPRLMRRRVAGLLIEREVRYLEPMVCNPKVPMVAVVGGAKVSSKIAVLESLLRTSTALIIGGGMAYTFLKAQGVGVGTSLVEDDFIDTARMLLQKAQSGGVSVVLPVDHVCASTFCADAQPVAVDDVHIPMHLMGMDVGPRTLEQYRAHLKGVSSVLWNGPVGVFEFDAFAHGTRVLAQLIAEATDAGATSVVGGGDSIAAVSKFGLASRMSHVSTGGGASLKLFEGKVLPGISCLET.

Substrate contacts are provided by residues 21 to 23 (DFN), Arg36, 60 to 63 (HLGD), Arg137, and Arg174. Residues Lys225, Gly316, Glu347, and 376–379 (GGDS) contribute to the ATP site.

This sequence belongs to the phosphoglycerate kinase family. As to quaternary structure, monomer.

The protein resides in the cytoplasm. It carries out the reaction (2R)-3-phosphoglycerate + ATP = (2R)-3-phospho-glyceroyl phosphate + ADP. Its pathway is carbohydrate degradation; glycolysis; pyruvate from D-glyceraldehyde 3-phosphate: step 2/5. The sequence is that of Phosphoglycerate kinase (pgk) from Treponema pallidum (strain Nichols).